Reading from the N-terminus, the 1138-residue chain is Mastermind-like protein 3 (1138 aa).

The span at 37-48 (PNSTPAAPSSNH) shows a compositional bias: polar residues. Disordered regions lie at residues 37-68 (PNST…AAVP), 119-148 (EQRA…ASAE), 169-188 (RSPL…FSPT), 207-237 (PSNM…THTP), 334-480 (EEKK…QRAK), and 503-547 (QQQQ…PQAF). Over residues 52-64 (GGCGGSGGPGGGS) the composition is skewed to gly residues. 2 stretches are compositionally biased toward polar residues: residues 130-139 (GKQQHPSKPQ) and 173-188 (NGDQ…FSPT). Composition is skewed to polar residues over residues 343–359 (QPAT…SVKS) and 372–394 (GSPQ…ATSL). The span at 395 to 411 (PSVASTPAAPNPASSPA) shows a compositional bias: low complexity. Polar residues predominate over residues 414–426 (AVQSPQTPNQAHT). The span at 467-480 (QLKQMAAQQQQRAK) shows a compositional bias: low complexity. K603 is subject to N6-acetyllysine. Disordered regions lie at residues 615-662 (RMTP…PRAH), 691-721 (HGQE…MVSG), 968-991 (LQGM…YPLQ), 1024-1084 (AAMG…SQAY), and 1090-1109 (QDVS…PGLP). Positions 633 to 649 (QQQQQQQQQQQQQQQQQ) are enriched in low complexity. Polar residues predominate over residues 1064-1084 (PPAQQQIPSGSFAPSSQSQAY).

It belongs to the mastermind family. Interacts through its N-terminal region with the ankyrin repeat region of the Notch proteins NOTCH1, NOTCH2, NOTCH3 and NOTCH4. Forms a DNA-binding complex with Notch proteins and RBPSUH/RBP-J kappa.

The protein localises to the nucleus speckle. Its function is as follows. Acts as a transcriptional coactivator for NOTCH proteins. Has been shown to amplify NOTCH-induced transcription of HES1. This Homo sapiens (Human) protein is Mastermind-like protein 3.